The chain runs to 613 residues: DNA polymerase II small subunit (613 aa).

The protein belongs to the DNA polymerase delta/II small subunit family. In terms of assembly, heterodimer of a large subunit and a small subunit.

The enzyme catalyses DNA(n) + a 2'-deoxyribonucleoside 5'-triphosphate = DNA(n+1) + diphosphate. It catalyses the reaction Exonucleolytic cleavage in the 3'- to 5'-direction to yield nucleoside 5'-phosphates.. Its function is as follows. Possesses two activities: a DNA synthesis (polymerase) and an exonucleolytic activity that degrades single-stranded DNA in the 3' to 5' direction. Has a template-primer preference which is characteristic of a replicative DNA polymerase. The chain is DNA polymerase II small subunit (polB) from Pyrococcus furiosus (strain ATCC 43587 / DSM 3638 / JCM 8422 / Vc1).